We begin with the raw amino-acid sequence, 830 residues long: Probable glucan 1,3-beta-glucosidase D (830 aa).

Basic and acidic residues-rich tracts occupy residues 1 to 11 and 74 to 84; these read MPGHSRSRDRL and VHEHDHDHEYD. Disordered stretches follow at residues 1-91, 127-163, and 260-297; these read MPGH…EEPW, MSGALGDDGPPPLPSDALGRGKGKKRLDRETRRQRRK, and GGPGMEMRHRGGGGPPAEGLLQKEGDWDGSTKGSSTSA. At 1-307 the chain is on the cytoplasmic side; it reads MPGHSRSRDR…RPSFWKRYHK (307 aa). Residues 147-163 are compositionally biased toward basic residues; the sequence is GKGKKRLDRETRRQRRK. Residues 308–328 traverse the membrane as a helical; Signal-anchor for type II membrane protein segment; sequence TFIFFAILIVLAAIAIPVGII. Topologically, residues 329 to 830 are extracellular; it reads EARRLHGTSG…PSFGNLPEYY (502 aa). N-linked (GlcNAc...) asparagine glycans are attached at residues Asn-341, Asn-376, Asn-381, Asn-393, Asn-397, Asn-546, and Asn-558. Glu-597 serves as the catalytic Proton donor. Residues Asn-610, Asn-669, and Asn-689 are each glycosylated (N-linked (GlcNAc...) asparagine). Glu-702 acts as the Nucleophile in catalysis.

The protein belongs to the glycosyl hydrolase 5 (cellulase A) family.

It is found in the cell membrane. It carries out the reaction Successive hydrolysis of beta-D-glucose units from the non-reducing ends of (1-&gt;3)-beta-D-glucans, releasing alpha-glucose.. In terms of biological role, glucosidase involved in the degradation of cellulosic biomass. Active on lichenan. The sequence is that of Probable glucan 1,3-beta-glucosidase D (exgD) from Aspergillus niger (strain ATCC MYA-4892 / CBS 513.88 / FGSC A1513).